Reading from the N-terminus, the 206-residue chain is Imidazoleglycerol-phosphate dehydratase (206 aa).

Belongs to the imidazoleglycerol-phosphate dehydratase family.

It is found in the cytoplasm. It carries out the reaction D-erythro-1-(imidazol-4-yl)glycerol 3-phosphate = 3-(imidazol-4-yl)-2-oxopropyl phosphate + H2O. It participates in amino-acid biosynthesis; L-histidine biosynthesis; L-histidine from 5-phospho-alpha-D-ribose 1-diphosphate: step 6/9. The protein is Imidazoleglycerol-phosphate dehydratase of Saccharopolyspora erythraea (strain ATCC 11635 / DSM 40517 / JCM 4748 / NBRC 13426 / NCIMB 8594 / NRRL 2338).